The following is a 1894-amino-acid chain: MASEEKTEELHPFTDIFNEDETDRNCLLSKPTCFIIFGKPGAGKTTLARNIAQAWKCIRVEALSVLEEHIAAEKETGAMLQSLLVSGHSIPDELVTKLILEKIKSPEVAHFGYILTEMPSLAQDNMTSLKQIELVKNLELQPDIIINIKCSDYDLCQRTCGQRQHSTTGYVYTREQWDPEIIESRRRKKRDFPKEGKSEEEEEEEEQEEEEAFIAEMQMVAEILQHLVQRPEDYLENVEITVKLYKELLLSALEEVMAEHNPQYLIELDGNKSPEELFMTVIERLKYLNVRRAAVITKLQGTEEEMTDIIDTEELFRTVSSYKLIAPRYRWYRSKWARSCPVSLKDGNIYSGAADYTVSFLGKMYCLSSEETLKLFSLNPRPFLLPPMPLPPCKVFIFGPEHIGKTTLANLIAEHFKAKVIDYAKLVQPRFDSAREKLIKDTITEATNTAIKVVQQRLLNEKQAKQQEERTLKELQVQYSKREYNDFLSKSSEELPSLENTGSKLSSLEIGQEDKSKSETTITGDQVKDVSTEESIEEVTENHPEVFAILEDTLRHAKELNFEQPHDKQAEILEEVIKETEDNKNRFPGAPKHGGWIVENFPLVRELWLSLIEKALLPDLVVYLSDAESNGKHVLNRLYLKNKAEIDGKILERLQEEAQAKKREEEEIRKVKEEELRLEEEKQRLMELATKKSKGRHRLTTLVAHHLALPYPDYPDNEAEEEVEDSEIHEESEAQEIPEYTRGSSLPEASETSETPEGDHEPEAEFKPPGDTAVEAETEKDPKEGLGSEDLLKVMLPEFPEDGYPNVPEMEPLKEVLNNHILSWKQLEQTIMDNVVSTLTVDVSNKTPQELLQRVVETMERPFKYSAWELNAEDYEEEAEDYQAETEIDEEQEEEEEEEEEGEEKIKEKRRHMGDTKHFCPVVLKENFVLQPGNPDEAVKYREKIYYFSSTEAKEKFLEHPEDYVSQNEPLKAPPLRICLLGPHGSGKTVCARKLAENFGIFHIQFDEFLQEKMLLKAERKFGPEFEDDSEEEQLVKQELEELAAQANVKIEEDTTKKQLPDVQLTEEEEAIKLSLTDNEPLPSEILDSILSEWWLKEPIRSTGFILDGFPRHPEEAQFLGERGFFPDAAVIIQVDDQDIFDRLLPAQVQKWKTKQHKKLERKKLIKDLKTKIKEDMVAKRRAELILEREKKRREDGTFRDEDEFSDEDADYEDDIENILEEEFPKDEEEMSEEDEEQEADATERLRNELGEKFETETNNIQSIQDEFDKVLIPIIMVNGARKMHIVQYVMNMKLKPLVENRESIFEKCYPVSSHLAHKMLSYTYKHMSSFGYWDPVKLSEGETIKPVENAENPLNPVIHRHYIYFLSNKQTKEKFMMNPIKYIRQPKPKATMPVRIMIVGPPKSGKTTVAKKLASDYGLRCLSVGDALRGMLNNHPDSELSLMLNWHLHKGKTVPDELAIQALDISLMESVCNTIGVVIDGYPVTPHQMDLLEARSIIPMVIFELHVPSKEIFKRLLLEKKTEQSMSYPLHNSSQIIAYKNAKYHKNINEIRQFYQKQHQNWHVIDGFHSKWWVWNEVLKDIQQMNKYIQTYMKKIKEGKAACIDKLCITPEELIARLGEFKQFCPVSLAESNELIDCSVTSSLEFAAEFRGHYYKMSSQEKLNKFLKDPELYVPPLAPHPLPPDDLLPKRLTLSELKSRFPKCAELQGYCPVTYQDGKQRYEALVPGNIRYALEYRNCIYICESEEKLQKFMRSPMQYWNQKLPRKLPPLKESIHLTSLPLPGYLEQGTATSLIKAMNAAGNLKPKLPFLSVRRSVLLYIAFHLKAFNPKGSEYSRKKYKKKLEQFVERCELITYLSSKMTRKYKEPQFRAIDFDHKLQTFLSLKNIDPVTG.

The segment at 32 to 286 is adenylate kinase 1; the sequence is TCFIIFGKPG…LFMTVIERLK (255 aa). An ATP-binding site is contributed by 41–46; sequence GAGKTT. Residues 61 to 90 are NMP 1; sequence EALSVLEEHIAAEKETGAMLQSLLVSGHSI. Residue 117 to 120 participates in AMP binding; that stretch reads EMPS. Positions 161–206 are LID 1; sequence GQRQHSTTGYVYTREQWDPEIIESRRRKKRDFPKEGKSEEEEEEEE. The tract at residues 188 to 211 is disordered; sequence KKRDFPKEGKSEEEEEEEEQEEEE. Acidic residues predominate over residues 198–211; it reads SEEEEEEEEQEEEE. R230 provides a ligand contact to AMP. The stretch at 451 to 478 forms a coiled coil; that stretch reads IKVVQQRLLNEKQAKQQEERTLKELQVQ. Residues 492–533 form a disordered region; it reads SEELPSLENTGSKLSSLEIGQEDKSKSETTITGDQVKDVSTE. The stretch at 651 to 691 forms a coiled coil; that stretch reads LERLQEEAQAKKREEEEIRKVKEEELRLEEEKQRLMELATK. Disordered stretches follow at residues 710-789 and 876-911; these read PYPD…LGSE and EEEA…EKRR. Positions 715–736 are enriched in acidic residues; it reads PDNEAEEEVEDSEIHEESEAQE. 2 stretches are compositionally biased toward basic and acidic residues: residues 757–768 and 777–789; these read EGDHEPEAEFKP and ETEK…LGSE. Positions 876 to 903 are enriched in acidic residues; sequence EEEAEDYQAETEIDEEQEEEEEEEEEGE. The adenylate kinase 2 stretch occupies residues 976–1187; it reads LRICLLGPHG…VAKRRAELIL (212 aa). Residue 985–990 coordinates ATP; the sequence is GSGKTV. The interval 1005 to 1036 is NMP 2; sequence QFDEFLQEKMLLKAERKFGPEFEDDSEEEQLV. AMP is bound by residues 1034 to 1036 and 1063 to 1066; these read QLV and VQLT. The tract at residues 1108-1128 is LID 2; it reads DGFPRHPEEAQFLGERGFFPD. Acidic residues predominate over residues 1223–1241; it reads EFPKDEEEMSEEDEEQEAD. The interval 1223 to 1243 is disordered; that stretch reads EFPKDEEEMSEEDEEQEADAT. Residues 1395 to 1584 are adenylate kinase 3; sequence VRIMIVGPPK…VWNEVLKDIQ (190 aa). Residue 1404 to 1409 participates in ATP binding; that stretch reads KSGKTT. The segment at 1424–1455 is NMP 3; that stretch reads SVGDALRGMLNNHPDSELSLMLNWHLHKGKTV. AMP is bound by residues R1430, 1482-1485, and Q1489; that span reads GYPV. The interval 1519–1533 is LID 3; the sequence is LEKKTEQSMSYPLHN.

The protein belongs to the adenylate kinase family. As to expression, highly expressed in the testis.

The protein resides in the cytoplasm. It localises to the nucleus. The protein localises to the cell projection. Its subcellular location is the cilium. It is found in the flagellum. It carries out the reaction a ribonucleoside 5'-phosphate + ATP = a ribonucleoside 5'-diphosphate + ADP. The catalysed reaction is AMP + ATP = 2 ADP. The enzyme catalyses GTP + AMP = GDP + ADP. It catalyses the reaction CMP + ATP = CDP + ADP. It carries out the reaction GTP + CMP = CDP + GDP. The catalysed reaction is dAMP + ATP = dADP + ADP. The enzyme catalyses dCMP + ATP = dCDP + ADP. It catalyses the reaction a ribonucleoside 5'-diphosphate + ATP = a ribonucleoside 5'-triphosphate + ADP. It carries out the reaction CDP + ATP = CTP + ADP. The catalysed reaction is CDP + GTP = CTP + GDP. The enzyme catalyses GDP + ATP = GTP + ADP. It catalyses the reaction UDP + ATP = UTP + ADP. It carries out the reaction GTP + UDP = UTP + GDP. The catalysed reaction is dTDP + GTP = dTTP + GDP. The enzyme catalyses dCDP + ATP = dCTP + ADP. It catalyses the reaction dCDP + GTP = dCTP + GDP. It carries out the reaction dGDP + ATP = dGTP + ADP. The catalysed reaction is dTDP + ATP = dTTP + ADP. The enzyme catalyses dADP + GTP = dATP + GDP. Broad-specificity nucleoside phosphate kinase involved in cellular nucleotide homeostasis by catalyzing nucleoside-phosphate interconversions. Similar to other adenylate kinases, preferentially catalyzes the phosphorylation of the nucleoside monophosphate AMP with ATP as phosphate donor to produce ADP. In vitro, can also catalyze the phosphorylation of CMP, dAMP and dCMP and use GTP as an alternate phosphate donor. Moreover, exhibits a diphosphate kinase activity, producing ATP, CTP, GTP, UTP, TTP, dATP, dCTP and dGTP from the corresponding diphosphate substrates with either ATP or GTP as phosphate donors. For this activity shows the following substrate preference CDP &gt; UDP &gt; ADP &gt; TDP. This Mus musculus (Mouse) protein is Adenylate kinase 9.